The sequence spans 151 residues: UPF0208 membrane protein Ent638_2839 (151 aa).

2 helical membrane passes run 46–65 (YAIR…QIAL) and 69–91 (LGPA…WWLG).

Belongs to the UPF0208 family.

Its subcellular location is the cell inner membrane. This chain is UPF0208 membrane protein Ent638_2839, found in Enterobacter sp. (strain 638).